We begin with the raw amino-acid sequence, 366 residues long: Tripartite motif-containing protein 54 (366 aa).

Residues 26 to 82 (CPICLEMFSKPVVILPCQHNLCRKCANDVFQASNPLWQSRSSTTVSSGGRFRCPSCR) form an RING-type zinc finger. A B box-type zinc finger spans residues 121–163 (EQHLMCEEHEDEKINIYCLSCEVPTCSLCKVFGAHKDCEVAPL). Zn(2+) contacts are provided by cysteine 126, histidine 129, cysteine 149, and histidine 155. The interval 168 to 211 (KRQKSELSDGIAMLVAGNDRVQAVITQMEEVCQTIEENSRRQKQ) is mediates microtubule-binding and homooligomerization. The stretch at 185–258 (NDRVQAVITQ…LIRQYGDHLE (74 aa)) forms a coiled coil. The COS domain maps to 271-329 (MEEPQMALYLQQAKELINKVGTMSKVELAGRPEPGYERMDQFTVSVEHVAEMLRTIDFQ). The disordered stretch occupies residues 326–366 (IDFQPGTSGEEEDEEVAVEGEEGNAGPEEERTDGRESTGQH). Over residues 334-347 (GEEEDEEVAVEGEE) the composition is skewed to acidic residues. Residues 353-366 (EEERTDGRESTGQH) show a composition bias toward basic and acidic residues.

As to quaternary structure, homooligomer and heterooligomer. Interacts with TRIM63 and probably with TRIM55. Interacts with tubulin.

The protein localises to the cytoplasm. It localises to the cytoskeleton. It is found in the myofibril. The protein resides in the sarcomere. Its subcellular location is the z line. In terms of biological role, may bind and stabilize microtubules during myotubes formation. The sequence is that of Tripartite motif-containing protein 54 (TRIM54) from Bos taurus (Bovine).